A 648-amino-acid chain; its full sequence is MKNLFACQHLALSAIQHAKGGHVGMALGASPILYTLWTKHIQFNPNCPKWINRDRLVMSAGHGSMALYPILHFAGLITKQEMLHHKYGQVNTSSHPEYAPNNFIDASTGPLGQGLGMAVGMALTQRVLAAEFKALSPKLFDHFTYVVVGDGDLQEGVSYEVAHLAGVYQLNKLIVLHDSNRVQMDSVVRDVSLENLQTRFTNMGWNYLETSDAVADIDAAIKQAKKSDKPTFIEVHTTIAKNTTLEDQPAGHWFIPTDKDFARFNSNTKTNFTPFEYPQTVYDFFHKQVIARQAKPVQAYKELLEKLKDKPLYTKFINWTENDYQALYLNQLDERKVAQANAATRNYLKDFLGQINNSNSNLYCLNADVARSCNIKLGDDNLHTNPHSRNIQVGIREFGMSTIMNGMALHGGVKVMGGTFLAFADYSKPAIRLGALMNLPTFYVYTHDSYQVGGDGPTHQPYDQLPMLRAIENVQVWRPCDEKETAAGVNYGLLSQDQTNVLILTRQALPSLEQSDSVQTLKGGYIISNRKQPDVIVAASGSEVQLALQLEQALNEQQLKTRVVSVPNINMLLSQPQSYLQQLFDPNSVLLTLEASASMEWYALAKYVKKHTHLGAFSFGESNDGQVVYEHKGFNVTNLLKLIKTLKS.

Histidine 22 serves as a coordination point for substrate. Thiamine diphosphate is bound by residues histidine 62 and 109–111 (GPL). Aspartate 150 lines the Mg(2+) pocket. 2 residues coordinate thiamine diphosphate: glycine 151 and asparagine 180. Residues asparagine 180 and valine 182 each coordinate Mg(2+). The substrate site is built by histidine 252, arginine 345, and serine 372. Histidine 252 contacts thiamine diphosphate. The active-site Proton donor is the glutamate 397. Phenylalanine 423 is a binding site for thiamine diphosphate. Residues histidine 447, aspartate 455, and arginine 506 each contribute to the substrate site.

The protein belongs to the transketolase family. As to quaternary structure, homodimer. Requires Mg(2+) as cofactor. It depends on Ca(2+) as a cofactor. Mn(2+) is required as a cofactor. The cofactor is Co(2+). Thiamine diphosphate serves as cofactor.

The enzyme catalyses D-sedoheptulose 7-phosphate + D-glyceraldehyde 3-phosphate = aldehydo-D-ribose 5-phosphate + D-xylulose 5-phosphate. Catalyzes the transfer of a two-carbon ketol group from a ketose donor to an aldose acceptor, via a covalent intermediate with the cofactor thiamine pyrophosphate. This is Transketolase (tkt) from Mycoplasma pneumoniae (strain ATCC 29342 / M129 / Subtype 1) (Mycoplasmoides pneumoniae).